A 352-amino-acid chain; its full sequence is Nicotinate-nucleotide--dimethylbenzimidazole phosphoribosyltransferase (352 aa).

E318 serves as the catalytic Proton acceptor.

This sequence belongs to the CobT family.

The enzyme catalyses 5,6-dimethylbenzimidazole + nicotinate beta-D-ribonucleotide = alpha-ribazole 5'-phosphate + nicotinate + H(+). It participates in nucleoside biosynthesis; alpha-ribazole biosynthesis; alpha-ribazole from 5,6-dimethylbenzimidazole: step 1/2. Its function is as follows. Catalyzes the synthesis of alpha-ribazole-5'-phosphate from nicotinate mononucleotide (NAMN) and 5,6-dimethylbenzimidazole (DMB). This Dehalococcoides mccartyi (strain ATCC BAA-2100 / JCM 16839 / KCTC 5957 / BAV1) protein is Nicotinate-nucleotide--dimethylbenzimidazole phosphoribosyltransferase.